A 178-amino-acid polypeptide reads, in one-letter code: Fibroin heavy chain (178 aa).

An N-terminal signal peptide occupies residues 1 to 21 (MRVKTFVILCCALQYVAYTNA). A highly repetitive region spans residues 149-178 (AVGAGAGAGAAAGSGAGAGAGYGAASGAGA).

In terms of assembly, silk fibroin elementary unit consists in a disulfide-linked heavy and light chain and a p25 glycoprotein in molar ratios of 6:6:1. This results in a complex of approximately 2.3 MDa. Post-translationally, the interchain disulfide bridge is essential for the intracellular transport and secretion of fibroin. Produced exclusively in the posterior (PSG) section of silk glands, which are essentially modified salivary glands.

Core component of the silk filament; a strong, insoluble and chemically inert fiber. This Bombyx mandarina (Wild silk moth) protein is Fibroin heavy chain (FIBH).